The sequence spans 409 residues: Thiaminase-1 (409 aa).

The signal sequence occupies residues 1 to 29; sequence MSKVKGFIYKPLMVMLALLLVVVSPAGAG. The active-site Nucleophile is the Cys143. The active-site Proton acceptor is Glu271.

Monomer.

The protein localises to the secreted. It catalyses the reaction pyridine + thiamine = heteropyrithiamine + 5-(2-hydroxyethyl)-4-methylthiazole. Degrades thiamine by replacing its thiazole moiety with a wide range of nucleophiles. The sequence is that of Thiaminase-1 from Paenibacillus thiaminolyticus (Bacillus thiaminolyticus).